A 313-amino-acid polypeptide reads, in one-letter code: tRNA dimethylallyltransferase (313 aa).

Glycine 17–threonine 24 provides a ligand contact to ATP. Substrate is bound at residue threonine 19–threonine 24. 3 interaction with substrate tRNA regions span residues aspartate 42–leucine 45, glutamine 166–arginine 170, and arginine 247–arginine 252.

The protein belongs to the IPP transferase family. As to quaternary structure, monomer. Mg(2+) is required as a cofactor.

The enzyme catalyses adenosine(37) in tRNA + dimethylallyl diphosphate = N(6)-dimethylallyladenosine(37) in tRNA + diphosphate. Catalyzes the transfer of a dimethylallyl group onto the adenine at position 37 in tRNAs that read codons beginning with uridine, leading to the formation of N6-(dimethylallyl)adenosine (i(6)A). This chain is tRNA dimethylallyltransferase, found in Yersinia pseudotuberculosis serotype O:1b (strain IP 31758).